A 427-amino-acid polypeptide reads, in one-letter code: Glutamate-1-semialdehyde 2,1-aminomutase (427 aa).

Position 265 is an N6-(pyridoxal phosphate)lysine (lysine 265).

It belongs to the class-III pyridoxal-phosphate-dependent aminotransferase family. HemL subfamily. Homodimer. It depends on pyridoxal 5'-phosphate as a cofactor.

The protein localises to the cytoplasm. It catalyses the reaction (S)-4-amino-5-oxopentanoate = 5-aminolevulinate. Its pathway is porphyrin-containing compound metabolism; protoporphyrin-IX biosynthesis; 5-aminolevulinate from L-glutamyl-tRNA(Glu): step 2/2. In Burkholderia mallei (strain NCTC 10229), this protein is Glutamate-1-semialdehyde 2,1-aminomutase.